The sequence spans 121 residues: Immunoglobulin heavy variable 6-1 (121 aa).

The N-terminal stretch at 1 to 20 is a signal peptide; sequence MSVSFLIFLPVLGLPWGVLS. Residues 21 to 45 form a framework-1 region; sequence QVQLQQSGPGLVKPSQTLSLTCAIS. The Ig-like domain maps to 21 to 121; that stretch reads QVQLQQSGPG…EDTAVYYCAR (101 aa). The cysteines at positions 42 and 119 are disulfide-linked. A complementarity-determining-1 region spans residues 46–55; it reads GDSVSSNSAA. A framework-2 region spans residues 56–72; sequence WNWIRQSPSRGLEWLGR. Residues 73–81 form a complementarity-determining-2 region; that stretch reads TYYRSKWYN. Positions 82-119 are framework-3; that stretch reads DYAVSVKSRITINPDTSKNQFSLQLNSVTPEDTAVYYC. A complementarity-determining-3 region spans residues 120–121; the sequence is AR.

In terms of assembly, immunoglobulins are composed of two identical heavy chains and two identical light chains; disulfide-linked.

The protein localises to the secreted. The protein resides in the cell membrane. In terms of biological role, v region of the variable domain of immunoglobulin heavy chains that participates in the antigen recognition. Immunoglobulins, also known as antibodies, are membrane-bound or secreted glycoproteins produced by B lymphocytes. In the recognition phase of humoral immunity, the membrane-bound immunoglobulins serve as receptors which, upon binding of a specific antigen, trigger the clonal expansion and differentiation of B lymphocytes into immunoglobulins-secreting plasma cells. Secreted immunoglobulins mediate the effector phase of humoral immunity, which results in the elimination of bound antigens. The antigen binding site is formed by the variable domain of one heavy chain, together with that of its associated light chain. Thus, each immunoglobulin has two antigen binding sites with remarkable affinity for a particular antigen. The variable domains are assembled by a process called V-(D)-J rearrangement and can then be subjected to somatic hypermutations which, after exposure to antigen and selection, allow affinity maturation for a particular antigen. This is Immunoglobulin heavy variable 6-1 from Homo sapiens (Human).